A 204-amino-acid chain; its full sequence is Guanylate kinase (204 aa).

The region spanning 5 to 184 (GLLLVLSGPS…AVDHIKAIVD (180 aa)) is the Guanylate kinase-like domain. 12–19 (GPSGVGKG) contacts ATP.

This sequence belongs to the guanylate kinase family.

The protein resides in the cytoplasm. The catalysed reaction is GMP + ATP = GDP + ADP. In terms of biological role, essential for recycling GMP and indirectly, cGMP. The sequence is that of Guanylate kinase from Lactobacillus acidophilus (strain ATCC 700396 / NCK56 / N2 / NCFM).